Reading from the N-terminus, the 170-residue chain is Protein HemX (170 aa).

Polar residues predominate over residues 1-17 (MTEQKNTNENDLQNGTS). Positions 1–24 (MTEQKNTNENDLQNGTSKADDDIR) are disordered. The helical transmembrane segment at 37-57 (GLIGSAVAILVILAIGGGLYY) threads the bilayer.

Its subcellular location is the cell membrane. This chain is Protein HemX, found in Proteus mirabilis.